The chain runs to 162 residues: MASLTHIDAEGSARMVDVSDKAATTREALAEGRVAMAPATLELILSGNAKKGDVMGVARLAGIMAAKRTHELIPLCHPLMLTKVEVEVVPDSALPGLHVTARAKTTGQTGVEMEALTAVSVACLTIYDMAKAADRGMRIEGIRLLEKSGGASGHFRAEPPTD.

Residues 75–77 and 113–114 contribute to the substrate site; these read LCH and ME. Aspartate 128 is a catalytic residue.

This sequence belongs to the MoaC family. In terms of assembly, homohexamer; trimer of dimers.

It carries out the reaction (8S)-3',8-cyclo-7,8-dihydroguanosine 5'-triphosphate = cyclic pyranopterin phosphate + diphosphate. Its pathway is cofactor biosynthesis; molybdopterin biosynthesis. Catalyzes the conversion of (8S)-3',8-cyclo-7,8-dihydroguanosine 5'-triphosphate to cyclic pyranopterin monophosphate (cPMP). In Xanthobacter autotrophicus (strain ATCC BAA-1158 / Py2), this protein is Cyclic pyranopterin monophosphate synthase.